Here is a 258-residue protein sequence, read N- to C-terminus: Imidazole glycerol phosphate synthase subunit HisF (258 aa).

Active-site residues include D11 and D130.

It belongs to the HisA/HisF family. In terms of assembly, heterodimer of HisH and HisF.

It is found in the cytoplasm. It carries out the reaction 5-[(5-phospho-1-deoxy-D-ribulos-1-ylimino)methylamino]-1-(5-phospho-beta-D-ribosyl)imidazole-4-carboxamide + L-glutamine = D-erythro-1-(imidazol-4-yl)glycerol 3-phosphate + 5-amino-1-(5-phospho-beta-D-ribosyl)imidazole-4-carboxamide + L-glutamate + H(+). Its pathway is amino-acid biosynthesis; L-histidine biosynthesis; L-histidine from 5-phospho-alpha-D-ribose 1-diphosphate: step 5/9. Functionally, IGPS catalyzes the conversion of PRFAR and glutamine to IGP, AICAR and glutamate. The HisF subunit catalyzes the cyclization activity that produces IGP and AICAR from PRFAR using the ammonia provided by the HisH subunit. The protein is Imidazole glycerol phosphate synthase subunit HisF of Escherichia coli (strain ATCC 8739 / DSM 1576 / NBRC 3972 / NCIMB 8545 / WDCM 00012 / Crooks).